The following is a 209-amino-acid chain: ATP-dependent Clp protease proteolytic subunit (209 aa).

Ser107 (nucleophile) is an active-site residue. The active site involves His132.

Belongs to the peptidase S14 family. Fourteen ClpP subunits assemble into 2 heptameric rings which stack back to back to give a disk-like structure with a central cavity, resembling the structure of eukaryotic proteasomes.

It is found in the cytoplasm. It carries out the reaction Hydrolysis of proteins to small peptides in the presence of ATP and magnesium. alpha-casein is the usual test substrate. In the absence of ATP, only oligopeptides shorter than five residues are hydrolyzed (such as succinyl-Leu-Tyr-|-NHMec, and Leu-Tyr-Leu-|-Tyr-Trp, in which cleavage of the -Tyr-|-Leu- and -Tyr-|-Trp bonds also occurs).. Functionally, cleaves peptides in various proteins in a process that requires ATP hydrolysis. Has a chymotrypsin-like activity. Plays a major role in the degradation of misfolded proteins. This Ruegeria pomeroyi (strain ATCC 700808 / DSM 15171 / DSS-3) (Silicibacter pomeroyi) protein is ATP-dependent Clp protease proteolytic subunit.